Reading from the N-terminus, the 453-residue chain is F-box/FBD/LRR-repeat protein At4g00160 (453 aa).

The 54-residue stretch at Lys15–Lys68 folds into the F-box domain. LRR repeat units lie at residues Leu89–Gly111, Met165–Gly190, Val215–Ala239, Ile247–Gly270, Leu282–Gln307, and Ser331–Glu358. One can recognise an FBD domain in the interval Lys355–Thr406.

This is F-box/FBD/LRR-repeat protein At4g00160 from Arabidopsis thaliana (Mouse-ear cress).